Consider the following 393-residue polypeptide: NAD(P)H-quinone oxidoreductase subunit H, chloroplastic (393 aa).

It belongs to the complex I 49 kDa subunit family. NDH is composed of at least 16 different subunits, 5 of which are encoded in the nucleus.

It localises to the plastid. The protein resides in the chloroplast thylakoid membrane. The enzyme catalyses a plastoquinone + NADH + (n+1) H(+)(in) = a plastoquinol + NAD(+) + n H(+)(out). It carries out the reaction a plastoquinone + NADPH + (n+1) H(+)(in) = a plastoquinol + NADP(+) + n H(+)(out). In terms of biological role, NDH shuttles electrons from NAD(P)H:plastoquinone, via FMN and iron-sulfur (Fe-S) centers, to quinones in the photosynthetic chain and possibly in a chloroplast respiratory chain. The immediate electron acceptor for the enzyme in this species is believed to be plastoquinone. Couples the redox reaction to proton translocation, and thus conserves the redox energy in a proton gradient. This is NAD(P)H-quinone oxidoreductase subunit H, chloroplastic from Platanus occidentalis (Sycamore).